We begin with the raw amino-acid sequence, 429 residues long: Adenylosuccinate synthetase (429 aa).

Residues 12–18 (GDEGKGK) and 40–42 (GHT) contribute to the GTP site. D13 (proton acceptor) is an active-site residue. Mg(2+)-binding residues include D13 and G40. IMP is bound by residues 13–16 (DEGK), 38–41 (NAGH), T128, R142, Q223, T238, and R302. H41 serves as the catalytic Proton donor. 298–304 (TVTGRPR) is a binding site for substrate. GTP-binding positions include R304, 330 to 332 (LLD), and 412 to 414 (SVG).

It belongs to the adenylosuccinate synthetase family. As to quaternary structure, homodimer. It depends on Mg(2+) as a cofactor.

The protein resides in the cytoplasm. The catalysed reaction is IMP + L-aspartate + GTP = N(6)-(1,2-dicarboxyethyl)-AMP + GDP + phosphate + 2 H(+). It participates in purine metabolism; AMP biosynthesis via de novo pathway; AMP from IMP: step 1/2. Its function is as follows. Plays an important role in the de novo pathway of purine nucleotide biosynthesis. Catalyzes the first committed step in the biosynthesis of AMP from IMP. The chain is Adenylosuccinate synthetase from Lactobacillus johnsonii (strain CNCM I-12250 / La1 / NCC 533).